The sequence spans 320 residues: Protein MRG1 (320 aa).

Positions 1-28 (MGSSSKEETASDGDTASGGASPSNDGRL) are disordered. Over residues 12-24 (DGDTASGGASPSN) the composition is skewed to polar residues. Residues 30-80 (SEGERVLAYHGPRVYGAKVQKVELRKKEWKYFVHYLGWNKNWDEWVSADRL) enclose the Tudor-knot domain. Residues 93 to 104 (ALDKKQGVEKGT) are compositionally biased toward basic and acidic residues. The tract at residues 93 to 147 (ALDKKQGVEKGTKSGRSAQTKTRSSADTKADKDDTKTNAAKGKKRKHESGNEKDN) is disordered. Positions 106–115 (SGRSAQTKTR) are enriched in polar residues. Positions 116–128 (SSADTKADKDDTK) are enriched in basic and acidic residues. The MRG domain maps to 150–318 (AEKLMKIQIP…KVSDGKGKGK (169 aa)).

Interacts with HAM1 and HAM2. Interacts (via MRG domain) with CO. Component of the NuA4 histone acetyltransferase complex. As to expression, ubiquitous. Mainly expressed in the vasculature of cotyledons and leaves, and in roots and inflorescences.

Its subcellular location is the nucleus. Chromatin remodeling factor. Acts as a 'reader' protein by binding to H3K36me3 and H3K36me3 to control histone H4 acetylation. Increases the transcriptional levels of the flowering time genes FLC and FT. Binds the chromatin at the FT promoter upon interaction with CO. The polypeptide is Protein MRG1 (Arabidopsis thaliana (Mouse-ear cress)).